The primary structure comprises 259 residues: Protein N-terminal and lysine N-methyltransferase efm7 (259 aa).

Residues Trp-53, 80 to 82, Asp-102, Trp-138, and Ala-164 contribute to the S-adenosyl-L-methionine site; that span reads GAA.

Belongs to the class I-like SAM-binding methyltransferase superfamily. EFM7 family.

It localises to the cytoplasm. Functionally, S-adenosyl-L-methionine-dependent protein methyltransferase that trimethylates the N-terminal glycine 'Gly-2' of elongation factor 1-alpha, before also catalyzing the mono- and dimethylation of 'Lys-3'. In Emericella nidulans (strain FGSC A4 / ATCC 38163 / CBS 112.46 / NRRL 194 / M139) (Aspergillus nidulans), this protein is Protein N-terminal and lysine N-methyltransferase efm7.